Reading from the N-terminus, the 118-residue chain is Thioredoxin H3 (118 aa).

Alanine 2 is subject to N-acetylalanine. In terms of domain architecture, Thioredoxin spans alanine 2–threonine 113. Catalysis depends on nucleophile residues cysteine 39 and cysteine 42. Cysteines 39 and 42 form a disulfide.

The protein belongs to the thioredoxin family. Plant H-type subfamily. In terms of assembly, interacts with FBA5 and FBA8. Interacts with FBA6. Interacts with MDH1.

It is found in the cytoplasm. Thiol-disulfide oxidoreductase that possesses disulfide reductase and insulin disulfide bonds reducing activities. Heat shock causes oligomerization and formation of high molecular weight (HMW) complexes with concomitant functional switching from a disulfide reductase to chaperone. The chain is Thioredoxin H3 (TRX3) from Arabidopsis thaliana (Mouse-ear cress).